Here is a 347-residue protein sequence, read N- to C-terminus: DnaJ homolog subfamily C member 22 (347 aa).

Residues 4–50 (GLLMTYTLWAVGGPAGLHHLYLGRDSHALLWMLTLGGGGLGWLWEFW) form the TM2 domain. A run of 7 helical transmembrane segments spans residues 5 to 25 (LLMT…HLYL), 32 to 52 (LLWM…FWML), 81 to 101 (FVAQ…SLSF), 105 to 125 (FYIV…AAVG), 135 to 155 (LGAA…ILPI), 186 to 206 (GLAY…HTAV), and 218 to 238 (FLSW…VLLL). The 71-residue stretch at 277-347 (LALQVFGLSE…GSWRWEETSF (71 aa)) folds into the J domain.

It localises to the membrane. Its function is as follows. May function as a co-chaperone. This Bos taurus (Bovine) protein is DnaJ homolog subfamily C member 22 (DNAJC22).